A 137-amino-acid polypeptide reads, in one-letter code: Large ribosomal subunit protein uL16 (137 aa).

The protein belongs to the universal ribosomal protein uL16 family. As to quaternary structure, part of the 50S ribosomal subunit.

Functionally, binds 23S rRNA and is also seen to make contacts with the A and possibly P site tRNAs. The protein is Large ribosomal subunit protein uL16 of Xanthomonas axonopodis pv. citri (strain 306).